The chain runs to 331 residues: Ribose-phosphate pyrophosphokinase (331 aa).

55-57 (DGE) contacts ATP. Positions 148 and 187 each coordinate Mg(2+). K211 is a catalytic residue. Residues R213, D237, and 241-245 (DTGGT) each bind D-ribose 5-phosphate.

This sequence belongs to the ribose-phosphate pyrophosphokinase family. Class I subfamily. As to quaternary structure, homohexamer. Requires Mg(2+) as cofactor.

The protein localises to the cytoplasm. The enzyme catalyses D-ribose 5-phosphate + ATP = 5-phospho-alpha-D-ribose 1-diphosphate + AMP + H(+). It participates in metabolic intermediate biosynthesis; 5-phospho-alpha-D-ribose 1-diphosphate biosynthesis; 5-phospho-alpha-D-ribose 1-diphosphate from D-ribose 5-phosphate (route I): step 1/1. Its function is as follows. Involved in the biosynthesis of the central metabolite phospho-alpha-D-ribosyl-1-pyrophosphate (PRPP) via the transfer of pyrophosphoryl group from ATP to 1-hydroxyl of ribose-5-phosphate (Rib-5-P). The chain is Ribose-phosphate pyrophosphokinase from Prochlorococcus marinus subsp. pastoris (strain CCMP1986 / NIES-2087 / MED4).